Consider the following 339-residue polypeptide: Phosphate acyltransferase (339 aa).

Belongs to the PlsX family. As to quaternary structure, homodimer. Probably interacts with PlsY.

The protein localises to the cytoplasm. The catalysed reaction is a fatty acyl-[ACP] + phosphate = an acyl phosphate + holo-[ACP]. It functions in the pathway lipid metabolism; phospholipid metabolism. In terms of biological role, catalyzes the reversible formation of acyl-phosphate (acyl-PO(4)) from acyl-[acyl-carrier-protein] (acyl-ACP). This enzyme utilizes acyl-ACP as fatty acyl donor, but not acyl-CoA. In Tolumonas auensis (strain DSM 9187 / NBRC 110442 / TA 4), this protein is Phosphate acyltransferase.